Reading from the N-terminus, the 285-residue chain is 3-methyl-2-oxobutanoate hydroxymethyltransferase (285 aa).

The interval 1 to 23 is disordered; the sequence is MSEHNVYGAAQPAQPAQPAQPRT. The span at 9–21 shows a compositional bias: low complexity; the sequence is AAQPAQPAQPAQP. Mg(2+)-binding residues include Asp-66 and Asp-105. 3-methyl-2-oxobutanoate-binding positions include 66–67, Asp-105, and Lys-135; that span reads DS. Glu-137 lines the Mg(2+) pocket. Glu-203 serves as the catalytic Proton acceptor.

It belongs to the PanB family. Homodecamer; pentamer of dimers. It depends on Mg(2+) as a cofactor.

It is found in the cytoplasm. The catalysed reaction is 3-methyl-2-oxobutanoate + (6R)-5,10-methylene-5,6,7,8-tetrahydrofolate + H2O = 2-dehydropantoate + (6S)-5,6,7,8-tetrahydrofolate. It participates in cofactor biosynthesis; (R)-pantothenate biosynthesis; (R)-pantoate from 3-methyl-2-oxobutanoate: step 1/2. Functionally, catalyzes the reversible reaction in which hydroxymethyl group from 5,10-methylenetetrahydrofolate is transferred onto alpha-ketoisovalerate to form ketopantoate. The protein is 3-methyl-2-oxobutanoate hydroxymethyltransferase of Mycobacterium avium (strain 104).